Here is a 239-residue protein sequence, read N- to C-terminus: Putative transcriptional regulator of 2-aminoethylphosphonate degradation operons (239 aa).

The HTH gntR-type domain maps to 8-76; the sequence is IPQYLLIKAQ…DRRGWFVTPE (69 aa). The segment at residues 36–55 is a DNA-binding region (H-T-H motif); the sequence is ERELCAIFNTTRITIRESLA.

The chain is Putative transcriptional regulator of 2-aminoethylphosphonate degradation operons (phnR) from Salmonella typhi.